A 483-amino-acid polypeptide reads, in one-letter code: Arginine/agmatine antiporter (483 aa).

12 helical membrane passes run 11-31 (ILGT…GGIF), 41-61 (ASAG…FFIA), 85-105 (GFGP…QIFG), 124-144 (YFAG…IWIF), 157-177 (FVNI…ILIT), 208-228 (STML…VISG), 239-259 (ATIL…LLPF), 289-309 (VLMN…WTIL), 336-356 (PSFS…LVYF), 364-384 (MLEI…LFLV), 415-435 (LWLI…LLAL), and 458-478 (EILK…LFSA).

This sequence belongs to the amino acid-polyamine-organocation (APC) superfamily. Basic amino acid/polyamine antiporter (APA) (TC 2.A.3.2) family.

It localises to the cell inner membrane. Functionally, catalyzes the exchange of L-arginine for agmatine. The arginine uptake by the bacterium in the macrophage may be a virulence factor against the host innate immune response. In Chlamydia trachomatis serovar A (strain ATCC VR-571B / DSM 19440 / HAR-13), this protein is Arginine/agmatine antiporter (aaxC).